The primary structure comprises 216 residues: LexA repressor (216 aa).

Residues 29-49 (RAEIAQALGFRSPNAAEDHLK) constitute a DNA-binding region (H-T-H motif). Catalysis depends on for autocatalytic cleavage activity residues serine 134 and lysine 171.

It belongs to the peptidase S24 family. In terms of assembly, homodimer.

The enzyme catalyses Hydrolysis of Ala-|-Gly bond in repressor LexA.. Its function is as follows. Represses a number of genes involved in the response to DNA damage (SOS response), including recA and lexA. In the presence of single-stranded DNA, RecA interacts with LexA causing an autocatalytic cleavage which disrupts the DNA-binding part of LexA, leading to derepression of the SOS regulon and eventually DNA repair. The polypeptide is LexA repressor (Bordetella bronchiseptica (strain ATCC BAA-588 / NCTC 13252 / RB50) (Alcaligenes bronchisepticus)).